Consider the following 184-residue polypeptide: ATP-dependent protease subunit HslV (184 aa).

Residue threonine 12 is part of the active site. Positions 166, 169, and 172 each coordinate Na(+).

It belongs to the peptidase T1B family. HslV subfamily. As to quaternary structure, a double ring-shaped homohexamer of HslV is capped on each side by a ring-shaped HslU homohexamer. The assembly of the HslU/HslV complex is dependent on binding of ATP.

The protein localises to the cytoplasm. The catalysed reaction is ATP-dependent cleavage of peptide bonds with broad specificity.. With respect to regulation, allosterically activated by HslU binding. Its function is as follows. Protease subunit of a proteasome-like degradation complex believed to be a general protein degrading machinery. The polypeptide is ATP-dependent protease subunit HslV (Brucella anthropi (strain ATCC 49188 / DSM 6882 / CCUG 24695 / JCM 21032 / LMG 3331 / NBRC 15819 / NCTC 12168 / Alc 37) (Ochrobactrum anthropi)).